The primary structure comprises 86 residues: Small ribosomal subunit protein uS15 (86 aa).

The protein belongs to the universal ribosomal protein uS15 family. In terms of assembly, part of the 30S ribosomal subunit. Forms a bridge to the 50S subunit in the 70S ribosome, contacting the 23S rRNA.

Functionally, one of the primary rRNA binding proteins, it binds directly to 16S rRNA where it helps nucleate assembly of the platform of the 30S subunit by binding and bridging several RNA helices of the 16S rRNA. Its function is as follows. Forms an intersubunit bridge (bridge B4) with the 23S rRNA of the 50S subunit in the ribosome. The polypeptide is Small ribosomal subunit protein uS15 (Vesicomyosocius okutanii subsp. Calyptogena okutanii (strain HA)).